Reading from the N-terminus, the 545-residue chain is CTP synthase (545 aa).

Positions 1–266 (MTTRYIFVTG…DDLVVKRFGL (266 aa)) are amidoligase domain. Ser-14 provides a ligand contact to CTP. UTP is bound at residue Ser-14. Residues 15 to 20 (SLGKGI) and Asp-72 each bind ATP. 2 residues coordinate Mg(2+): Asp-72 and Glu-140. CTP-binding positions include 147-149 (DIE), 187-192 (KTKPTQ), and Lys-223. Residues 187 to 192 (KTKPTQ) and Lys-223 contribute to the UTP site. 239-241 (KDV) is an ATP binding site. The region spanning 291 to 542 (VIGMVGKYIE…IAAASAHQKR (252 aa)) is the Glutamine amidotransferase type-1 domain. Position 352 (Gly-352) interacts with L-glutamine. Residue Cys-379 is the Nucleophile; for glutamine hydrolysis of the active site. L-glutamine-binding positions include 380-383 (LGMQ), Glu-403, and Arg-470. Active-site residues include His-515 and Glu-517.

This sequence belongs to the CTP synthase family. As to quaternary structure, homotetramer.

The enzyme catalyses UTP + L-glutamine + ATP + H2O = CTP + L-glutamate + ADP + phosphate + 2 H(+). The catalysed reaction is L-glutamine + H2O = L-glutamate + NH4(+). It catalyses the reaction UTP + NH4(+) + ATP = CTP + ADP + phosphate + 2 H(+). The protein operates within pyrimidine metabolism; CTP biosynthesis via de novo pathway; CTP from UDP: step 2/2. Allosterically activated by GTP, when glutamine is the substrate; GTP has no effect on the reaction when ammonia is the substrate. The allosteric effector GTP functions by stabilizing the protein conformation that binds the tetrahedral intermediate(s) formed during glutamine hydrolysis. Inhibited by the product CTP, via allosteric rather than competitive inhibition. Its function is as follows. Catalyzes the ATP-dependent amination of UTP to CTP with either L-glutamine or ammonia as the source of nitrogen. Regulates intracellular CTP levels through interactions with the four ribonucleotide triphosphates. This chain is CTP synthase, found in Shewanella baltica (strain OS223).